A 469-amino-acid polypeptide reads, in one-letter code: Glutamine synthetase (469 aa).

One can recognise a GS beta-grasp domain in the interval 13-97; that stretch reads KEVRYVDLRF…LRCDIVEPAT (85 aa). The 365-residue stretch at 105-469 folds into the GS catalytic domain; sequence PRSIAKRAEA…PVEFDMYYSL (365 aa). Mg(2+) is bound by residues glutamate 130 and glutamate 132. Glutamate 208 is a binding site for ATP. Residues glutamate 213 and glutamate 221 each coordinate Mg(2+). L-glutamate-binding positions include 265-266 and glycine 266; that span reads NG. A Mg(2+)-binding site is contributed by histidine 270. Residues 272–274 and serine 274 each bind ATP; that span reads HQS. The L-glutamate site is built by arginine 322, glutamate 328, and arginine 340. Positions 340, 345, and 353 each coordinate ATP. Glutamate 358 provides a ligand contact to Mg(2+). Residue arginine 360 participates in L-glutamate binding. An O-AMP-tyrosine modification is found at tyrosine 398.

It belongs to the glutamine synthetase family. As to quaternary structure, oligomer of 12 subunits arranged in the form of two hexameric ring. Requires Mg(2+) as cofactor.

The protein resides in the cytoplasm. The enzyme catalyses L-glutamate + NH4(+) + ATP = L-glutamine + ADP + phosphate + H(+). The activity of this enzyme could be controlled by adenylation under conditions of abundant glutamine. Its function is as follows. Catalyzes the ATP-dependent biosynthesis of glutamine from glutamate and ammonia. This Methylococcus capsulatus (strain ATCC 33009 / NCIMB 11132 / Bath) protein is Glutamine synthetase.